A 294-amino-acid polypeptide reads, in one-letter code: ATP synthase gamma chain (294 aa).

It belongs to the ATPase gamma chain family. As to quaternary structure, F-type ATPases have 2 components, CF(1) - the catalytic core - and CF(0) - the membrane proton channel. CF(1) has five subunits: alpha(3), beta(3), gamma(1), delta(1), epsilon(1). CF(0) has three main subunits: a, b and c.

Its subcellular location is the cell inner membrane. Its function is as follows. Produces ATP from ADP in the presence of a proton gradient across the membrane. The gamma chain is believed to be important in regulating ATPase activity and the flow of protons through the CF(0) complex. The polypeptide is ATP synthase gamma chain (Campylobacter lari (strain RM2100 / D67 / ATCC BAA-1060)).